Consider the following 454-residue polypeptide: tRNA modification GTPase MnmE (454 aa).

The (6S)-5-formyl-5,6,7,8-tetrahydrofolate site is built by Arg-23, Glu-80, and Lys-120. The TrmE-type G domain occupies 216-377; it reads GMKVVIAGRP…LRNHLKQSMG (162 aa). Residue Asn-226 participates in K(+) binding. GTP contacts are provided by residues 226 to 231, 245 to 251, 270 to 273, 335 to 338, and 358 to 360; these read NAGKSS, TDIAGTT, DTAG, NKAD, and SAR. Ser-230 provides a ligand contact to Mg(2+). Thr-245, Ile-247, and Thr-250 together coordinate K(+). Position 251 (Thr-251) interacts with Mg(2+). Lys-454 is a binding site for (6S)-5-formyl-5,6,7,8-tetrahydrofolate.

The protein belongs to the TRAFAC class TrmE-Era-EngA-EngB-Septin-like GTPase superfamily. TrmE GTPase family. In terms of assembly, homodimer. Heterotetramer of two MnmE and two MnmG subunits. The cofactor is K(+).

Its subcellular location is the cytoplasm. In terms of biological role, exhibits a very high intrinsic GTPase hydrolysis rate. Involved in the addition of a carboxymethylaminomethyl (cmnm) group at the wobble position (U34) of certain tRNAs, forming tRNA-cmnm(5)s(2)U34. The sequence is that of tRNA modification GTPase MnmE from Salmonella typhi.